Here is a 455-residue protein sequence, read N- to C-terminus: Beta-1,3-galactosyl-O-glycosyl-glycoprotein beta-1,6-N-acetylglucosaminyltransferase 4 (455 aa).

The Cytoplasmic segment spans residues 1–13 (MKIFRCCFKYTLQ). The helical; Signal-anchor for type II membrane protein transmembrane segment at 14–34 (QKLFILLLTLWLFSLLKLLNV) threads the bilayer. The Lumenal segment spans residues 35 to 455 (GRLLFPQRDI…TEGTRQSHTL (421 aa)). N-linked (GlcNAc...) asparagine glycosylation is present at N73. 4 disulfides stabilise this stretch: C74–C228, C162–C383, C183–C210, and C392–C424. N287 and N382 each carry an N-linked (GlcNAc...) asparagine glycan.

Belongs to the glycosyltransferase 14 family.

The protein localises to the golgi apparatus membrane. It catalyses the reaction a 3-O-[beta-D-galactosyl-(1-&gt;3)-N-acetyl-alpha-D-galactosaminyl]-L-seryl-[protein] + UDP-N-acetyl-alpha-D-glucosamine = 3-O-{beta-D-galactosyl-(1-&gt;3)-[N-acetyl-beta-D-glucosaminyl-(1-&gt;6)]-N-acetyl-alpha-D-galactosaminyl}-L-seryl-[protein] + UDP + H(+). The catalysed reaction is a 3-O-[beta-D-galactosyl-(1-&gt;3)-N-acetyl-alpha-D-galactosaminyl]-L-threonyl-[protein] + UDP-N-acetyl-alpha-D-glucosamine = a 3-O-{beta-D-galactosyl-(1-&gt;3)-[N-acetyl-beta-D-glucosaminyl-(1-&gt;6)]-N-acetyl-alpha-D-galactosaminyl}-L-threonyl-[protein] + UDP + H(+). Its pathway is protein modification; protein glycosylation. Glycosyltransferase that mediates core 2 O-glycan branching, an important step in mucin-type biosynthesis. Does not have core 4 O-glycan or I-branching enzyme activity. This is Beta-1,3-galactosyl-O-glycosyl-glycoprotein beta-1,6-N-acetylglucosaminyltransferase 4 (Gcnt4) from Mus musculus (Mouse).